The following is a 162-amino-acid chain: Peptide deformylase (162 aa).

2 residues coordinate Fe cation: Cys86 and His128. Glu129 is a catalytic residue. Residue His132 participates in Fe cation binding.

This sequence belongs to the polypeptide deformylase family. Fe(2+) is required as a cofactor.

The catalysed reaction is N-terminal N-formyl-L-methionyl-[peptide] + H2O = N-terminal L-methionyl-[peptide] + formate. In terms of biological role, removes the formyl group from the N-terminal Met of newly synthesized proteins. Requires at least a dipeptide for an efficient rate of reaction. N-terminal L-methionine is a prerequisite for activity but the enzyme has broad specificity at other positions. The sequence is that of Peptide deformylase from Treponema pallidum (strain Nichols).